The primary structure comprises 297 residues: Cyclin-dependent kinase 1 (297 aa).

Position 1 is an N-acetylmethionine (methionine 1). Tyrosine 4 carries the phosphotyrosine; by PKR modification. The region spanning 4-287 (YIKIEKIGEG…GKMALKHPYF (284 aa)) is the Protein kinase domain. Residues lysine 6 and lysine 9 each carry the N6-acetyllysine; alternate modification. Glycyl lysine isopeptide (Lys-Gly) (interchain with G-Cter in SUMO2); alternate cross-links involve residues lysine 6 and lysine 9. 10 to 18 (IGEGTYGVV) is a binding site for ATP. A Phosphothreonine modification is found at threonine 14. At tyrosine 15 the chain carries Phosphotyrosine; by PKMYT1, WEE1, WEE2 and PKC/PRKCD. A Phosphotyrosine; by WEE1 and WEE2 modification is found at tyrosine 15. Tyrosine 19 carries the post-translational modification Phosphotyrosine. Residue lysine 20 forms a Glycyl lysine isopeptide (Lys-Gly) (interchain with G-Cter in SUMO2) linkage. Lysine 33 contributes to the ATP binding site. Serine 39 is modified (phosphoserine). Tyrosine 77 is modified (phosphotyrosine). Aspartate 128 (proton acceptor) is an active-site residue. Residue lysine 139 forms a Glycyl lysine isopeptide (Lys-Gly) (interchain with G-Cter in SUMO2) linkage. Residue threonine 141 is modified to Phosphothreonine. Position 161 is a phosphothreonine; by CAK (threonine 161). At serine 178 the chain carries Phosphoserine. Threonine 222 carries the post-translational modification Phosphothreonine. An N6-succinyllysine modification is found at lysine 245. A Phosphoserine modification is found at serine 248.

This sequence belongs to the protein kinase superfamily. CMGC Ser/Thr protein kinase family. CDC2/CDKX subfamily. As to quaternary structure, forms a stable but non-covalent complex with a regulatory subunit and with a cyclin. Interacts with cyclins-B (CCNB1, CCNB2 and CCNB3) to form a serine/threonine kinase holoenzyme complex also known as maturation promoting factor (MPF). The cyclin subunit imparts substrate specificity to the complex. Can also form CDK1-cylin-D and CDK1-cyclin-E complexes that phosphorylate RB1 in vitro. Binds to RB1 and other transcription factors such as FOXO1 and RUNX2. Promotes G2-M transition when in complex with a cyclin-B. Interacts with DLGAP5. Binds to the CDK inhibitors CDKN1A/p21 and CDKN1B/p27. Isoform 2 is unable to complex with cyclin-B1 and also fails to bind to CDKN1A/p21. Interacts with catalytically active CCNB1 and RALBP1 during mitosis to form an endocytotic complex during interphase. Associates with cyclins-A and B1 during S-phase in regenerating hepatocytes. Interacts with FANCC. Interacts with CEP63; this interaction recruits CDK1 to centrosomes. Interacts with CENPA. Interacts with NR1D1. Interacts with proteasome subunit PSMA8; to participate in meiosis progression during spermatogenesis. Phosphorylation at Thr-161 by CAK/CDK7 activates kinase activity. Phosphorylation at Thr-14 and Tyr-15 by PKMYT1 prevents nuclear translocation. Phosphorylation at Tyr-15 by WEE1 and WEE2 inhibits the protein kinase activity and acts as a negative regulator of entry into mitosis (G2 to M transition). Phosphorylation by PKMYT1 and WEE1 takes place during mitosis to keep CDK1-cyclin-B complexes inactive until the end of G2. By the end of G2, PKMYT1 and WEE1 are inactivated, but CDC25A and CDC25B are activated. Dephosphorylation by active CDC25A and CDC25B at Thr-14 and Tyr-15, leads to CDK1 activation at the G2-M transition. Phosphorylation at Tyr-15 by WEE2 during oogenesis is required to maintain meiotic arrest in oocytes during the germinal vesicle (GV) stage, a long period of quiescence at dictyate prophase I, leading to prevent meiotic reentry. Phosphorylation by WEE2 is also required for metaphase II exit during egg activation to ensure exit from meiosis in oocytes and promote pronuclear formation. Phosphorylated at Tyr-4 by PKR/EIF2AK2 upon genotoxic stress. This phosphorylation triggers CDK1 polyubiquitination and subsequent proteolysis, thus leading to G2 arrest. In response to UV irradiation, phosphorylation at Tyr-15 by PRKCD activates the G2/M DNA damage checkpoint. Post-translationally, polyubiquitinated upon genotoxic stress.

The protein localises to the nucleus. It localises to the cytoplasm. It is found in the mitochondrion. Its subcellular location is the cytoskeleton. The protein resides in the microtubule organizing center. The protein localises to the centrosome. It localises to the spindle. The catalysed reaction is L-seryl-[protein] + ATP = O-phospho-L-seryl-[protein] + ADP + H(+). It catalyses the reaction L-threonyl-[protein] + ATP = O-phospho-L-threonyl-[protein] + ADP + H(+). It carries out the reaction [DNA-directed RNA polymerase] + ATP = phospho-[DNA-directed RNA polymerase] + ADP + H(+). With respect to regulation, phosphorylation at Thr-14 or Tyr-15 inactivates the enzyme, while phosphorylation at Thr-161 activates it. Activated through a multistep process; binding to cyclin-B is required for relocation of cyclin-kinase complexes to the nucleus, activated by CAK/CDK7-mediated phosphorylation on Thr-161, and CDC25-mediated dephosphorylation of inhibitory phosphorylation on Thr-14 and Tyr-15. Activity is restricted during S-phase in an ATR-dependent manner to prevent premature entry into G2. Repressed by the CDK inhibitors CDKN1A/p21 and CDKN1B/p27 during the G1 phase and by CDKN1A/p21 at the G1-S checkpoint upon DNA damage. Transient activation by rapid and transient dephosphorylation at Tyr-15 triggered by TGFB1. In terms of biological role, plays a key role in the control of the eukaryotic cell cycle by modulating the centrosome cycle as well as mitotic onset; promotes G2-M transition via association with multiple interphase cyclins. Phosphorylates PARVA/actopaxin, APC, AMPH, APC, BARD1, Bcl-xL/BCL2L1, BRCA2, CALD1, CASP8, CDC7, CDC20, CDC25A, CDC25C, CC2D1A, CENPA, CSNK2 proteins/CKII, FZR1/CDH1, CDK7, CEBPB, CHAMP1, DMD/dystrophin, EEF1 proteins/EF-1, EZH2, KIF11/EG5, EGFR, FANCG, FOS, GFAP, GOLGA2/GM130, GRASP1, UBE2A/hHR6A, HIST1H1 proteins/histone H1, HMGA1, HIVEP3/KRC, KAT5, LMNA, LMNB, LBR, MKI67, LATS1, MAP1B, MAP4, MARCKS, MCM2, MCM4, MKLP1, MLST8, MYB, NEFH, NFIC, NPC/nuclear pore complex, PITPNM1/NIR2, NPM1, NCL, NUCKS1, NPM1/numatrin, ORC1, PRKAR2A, EEF1E1/p18, EIF3F/p47, p53/TP53, NONO/p54NRB, PAPOLA, PLEC/plectin, RB1, TPPP, UL40/R2, RAB4A, RAP1GAP, RBBP8/CtIP, RCC1, RPS6KB1/S6K1, KHDRBS1/SAM68, ESPL1, SKI, BIRC5/survivin, STIP1, TEX14, beta-tubulins, MAPT/TAU, NEDD1, VIM/vimentin, TK1, FOXO1, RUNX1/AML1, SAMHD1, SIRT2, CGAS, ZAR1 and RUNX2. CDK1/CDC2-cyclin-B controls pronuclear union in interphase fertilized eggs. Essential for early stages of embryonic development. During G2 and early mitosis, CDC25A/B/C-mediated dephosphorylation activates CDK1/cyclin complexes which phosphorylate several substrates that trigger at least centrosome separation, Golgi dynamics, nuclear envelope breakdown and chromosome condensation. Once chromosomes are condensed and aligned at the metaphase plate, CDK1 activity is switched off by WEE1- and PKMYT1-mediated phosphorylation to allow sister chromatid separation, chromosome decondensation, reformation of the nuclear envelope and cytokinesis. Phosphorylates KRT5 during prometaphase and metaphase. Inactivated by PKR/EIF2AK2- and WEE1-mediated phosphorylation upon DNA damage to stop cell cycle and genome replication at the G2 checkpoint thus facilitating DNA repair. Reactivated after successful DNA repair through WIP1-dependent signaling leading to CDC25A/B/C-mediated dephosphorylation and restoring cell cycle progression. Catalyzes lamin (LMNA, LMNB1 and LMNB2) phosphorylation at the onset of mitosis, promoting nuclear envelope breakdown. In proliferating cells, CDK1-mediated FOXO1 phosphorylation at the G2-M phase represses FOXO1 interaction with 14-3-3 proteins and thereby promotes FOXO1 nuclear accumulation and transcription factor activity, leading to cell death of postmitotic neurons. The phosphorylation of beta-tubulins regulates microtubule dynamics during mitosis. NEDD1 phosphorylation promotes PLK1-mediated NEDD1 phosphorylation and subsequent targeting of the gamma-tubulin ring complex (gTuRC) to the centrosome, an important step for spindle formation. In addition, CC2D1A phosphorylation regulates CC2D1A spindle pole localization and association with SCC1/RAD21 and centriole cohesion during mitosis. The phosphorylation of Bcl-xL/BCL2L1 after prolongated G2 arrest upon DNA damage triggers apoptosis. In contrast, CASP8 phosphorylation during mitosis prevents its activation by proteolysis and subsequent apoptosis. This phosphorylation occurs in cancer cell lines, as well as in primary breast tissues and lymphocytes. EZH2 phosphorylation promotes H3K27me3 maintenance and epigenetic gene silencing. CALD1 phosphorylation promotes Schwann cell migration during peripheral nerve regeneration. CDK1-cyclin-B complex phosphorylates NCKAP5L and mediates its dissociation from centrosomes during mitosis. Regulates the amplitude of the cyclic expression of the core clock gene BMAL1 by phosphorylating its transcriptional repressor NR1D1, and this phosphorylation is necessary for SCF(FBXW7)-mediated ubiquitination and proteasomal degradation of NR1D1. Phosphorylates EML3 at 'Thr-881' which is essential for its interaction with HAUS augmin-like complex and TUBG1. Phosphorylates CGAS during mitosis, leading to its inhibition, thereby preventing CGAS activation by self DNA during mitosis. Phosphorylates SKA3 during mitosis which promotes SKA3 binding to the NDC80 complex and anchoring of the SKA complex to kinetochores, to enable stable attachment of mitotic spindle microtubules to kinetochores. This is Cyclin-dependent kinase 1 (Cdk1) from Mus musculus (Mouse).